The sequence spans 343 residues: Thromboxane A2 receptor (343 aa).

Topologically, residues 1–29 are extracellular; sequence MWPNGSSLGPCFRPTNITLEERRLIASPW. N-linked (GlcNAc...) asparagine glycosylation is found at N4 and N16. A helical membrane pass occupies residues 30–52; that stretch reads FAASFCVVGLASNLLALSVLAGA. The Cytoplasmic segment spans residues 53 to 66; it reads RQGGSHTRSSFLTF. The chain crosses the membrane as a helical span at residues 67-87; the sequence is LCGLVLTDFLGLLVTGTIVVS. Residues 88 to 106 lie on the Extracellular side of the membrane; the sequence is QHAALFEWHAVDPGCRLCR. A disulfide bridge links C105 with C183. Residues 107 to 128 traverse the membrane as a helical segment; it reads FMGVVMIFFGLSPLLLGAAMAS. Topologically, residues 129–149 are cytoplasmic; it reads ERYLGITRPFSRPAVASQRRA. A helical transmembrane segment spans residues 150–172; it reads WATVGLVWAAALALGLLPLLGVG. The Extracellular segment spans residues 173–193; that stretch reads RYTVQYPGSWCFLTLGAESGD. Residues 194-219 form a helical membrane-spanning segment; that stretch reads VAFGLLFSMLGGLSVGLSFLLNTVSV. Residues 220–246 lie on the Cytoplasmic side of the membrane; it reads ATLCHVYHGQEAAQQRPRDSEVEMMAQ. A helical transmembrane segment spans residues 247-270; the sequence is LLGIMVVASVCWLPLLVFIAQTVL. The Extracellular portion of the chain corresponds to 271–289; the sequence is RNPPAMSPAGQLSRTTEKE. The helical transmembrane segment at 290–311 threads the bilayer; the sequence is LLIYLRVATWNQILDPWVYILF. At 312-343 the chain is on the cytoplasmic side; sequence RRAVLRRLQPRLSTRPRSLSLQPQLTQRSGLQ. A phosphoserine mark is found at S329 and S331.

This sequence belongs to the G-protein coupled receptor 1 family. Interacts with RPGRIP1L. Interacts with PSMA3. Interacts with RACK1; the interaction regulates TBXA2R cell surface expression.

The protein localises to the cell membrane. Its function is as follows. Receptor for thromboxane A2 (TXA2), a potent stimulator of platelet aggregation. The activity of this receptor is mediated by a G-protein that activates a phosphatidylinositol-calcium second messenger system. In the kidney, the binding of TXA2 to glomerular TP receptors causes intense vasoconstriction. Activates phospholipase C. Functionally, activates adenylyl cyclase. In terms of biological role, inhibits adenylyl cyclase. The chain is Thromboxane A2 receptor (TBXA2R) from Homo sapiens (Human).